The sequence spans 254 residues: Bax inhibitor 1 homolog (254 aa).

Residues 1-43 (MASTSNRNFFSSNMTQIPMDEKIRIALQFNNLSQSTKQTLTKV) lie on the Cytoplasmic side of the membrane. The helical transmembrane segment at 44–64 (YCALAIGILTATVGVLFSMFI) threads the bilayer. Residues 65–66 (YR) lie on the Lumenal side of the membrane. A helical transmembrane segment spans residues 67 to 87 (PGFLMTLLLVIGSAILFATTP). Residues 88–98 (RTQDYKTQVKR) are Cytoplasmic-facing. The chain crosses the membrane as a helical span at residues 99–119 (FTLFNLVTFVTGMSSSGLIEL). The Lumenal segment spans residues 120–126 (YMDINSS). Residues 127-147 (IVLNAFMATCGIFISFTLFSL) traverse the membrane as a helical segment. The Cytoplasmic segment spans residues 148–152 (LTNKR). A helical membrane pass occupies residues 153 to 173 (LYIFIGSSLASLSIGIFVLAL). Residues 174–187 (TRLFGGYSEPLDQL) are Lumenal-facing. A helical transmembrane segment spans residues 188–208 (FILAILASSVLFIIFDTQIMV). The Cytoplasmic segment spans residues 209–217 (HRIENLGEK). The helical intramembrane region spans 218–238 (DVLFHAFILFYDFVDLFRVIL). Over 239-254 (KILAKKENKNNNKSRR) the chain is Cytoplasmic.

The protein belongs to the BI1 family.

The protein resides in the endoplasmic reticulum membrane. This Dictyostelium discoideum (Social amoeba) protein is Bax inhibitor 1 homolog.